The primary structure comprises 211 residues: Thymidylate kinase (211 aa).

10–17 (GLDGSGKT) serves as a coordination point for ATP.

The protein belongs to the thymidylate kinase family.

It catalyses the reaction dTMP + ATP = dTDP + ADP. In terms of biological role, phosphorylation of dTMP to form dTDP in both de novo and salvage pathways of dTTP synthesis. The chain is Thymidylate kinase from Blochmanniella floridana.